The following is a 360-amino-acid chain: Tryptophan--tRNA ligase, mitochondrial (360 aa).

ATP contacts are provided by residues Gln38 and 44–47 (HLGN). Positions 39–47 (PTGIPHLGN) match the 'HIGH' region motif. Residue Asp168 participates in L-tryptophan binding. Residues 180–182 (GED) and 229–233 (KMSKS) each bind ATP. A compositionally biased stretch (basic and acidic residues) spans 220-230 (IRSLREPEKKM). The interval 220–241 (IRSLREPEKKMSKSSGGPRSRI) is disordered. Residues 229–233 (KMSKS) carry the 'KMSKS' region motif.

Belongs to the class-I aminoacyl-tRNA synthetase family.

The protein resides in the mitochondrion matrix. It catalyses the reaction tRNA(Trp) + L-tryptophan + ATP = L-tryptophyl-tRNA(Trp) + AMP + diphosphate + H(+). Its function is as follows. Catalyzes the attachment of tryptophan to tRNA(Trp). The polypeptide is Tryptophan--tRNA ligase, mitochondrial (Caenorhabditis elegans).